The sequence spans 340 residues: MSRKFMQVYEYDREQYLDEFIEDRYNDSFITSPEYYSAEKYMCRYTTLNHNCVNVRRCALDSKLLHDIITNCKIYNNIELVRATKFVYYLDLIKCNWVSKVGDSVLYPVIFITHTSTRNLDKVSVKTYKGVKVKKLNRCADHAIVINPFVKFKLTLPNKTSHAKVLVTFCKLRTDITPVEAPLPGNVLVYTFPDINKRIPGYIHVNIEGCIDGMIYINSSKFACVLKLHRSMYRIPPFPIDICSCCSQYTNDDIEIPIHDLIKDVAIFKNKETVYYLKLNNKTIARFTYFNNIDTAITQEHEYVKIALGIVCKLMINNMHSIVGVNHSNTFVNCLLEDNV.

Belongs to the orthopoxvirus B17 protein family.

This is Protein B17 from Vaccinia virus (strain Copenhagen) (VACV).